Consider the following 381-residue polypeptide: Mannitol-1-phosphate 5-dehydrogenase (381 aa).

3–14 contacts NAD(+); the sequence is AVHFGAGNIGRG.

The protein belongs to the mannitol dehydrogenase family.

It catalyses the reaction D-mannitol 1-phosphate + NAD(+) = beta-D-fructose 6-phosphate + NADH + H(+). The chain is Mannitol-1-phosphate 5-dehydrogenase from Photobacterium profundum (strain SS9).